We begin with the raw amino-acid sequence, 469 residues long: Probable Xaa-Pro aminopeptidase AN0832 (469 aa).

The Mn(2+) site is built by Asp-260, Asp-271, Glu-398, and Glu-437.

Belongs to the peptidase M24B family. Mn(2+) serves as cofactor.

The enzyme catalyses Release of any N-terminal amino acid, including proline, that is linked to proline, even from a dipeptide or tripeptide.. Functionally, catalyzes the removal of a penultimate prolyl residue from the N-termini of peptides. This chain is Probable Xaa-Pro aminopeptidase AN0832, found in Emericella nidulans (strain FGSC A4 / ATCC 38163 / CBS 112.46 / NRRL 194 / M139) (Aspergillus nidulans).